Consider the following 348-residue polypeptide: Phenylalanine--tRNA ligase alpha subunit (348 aa).

Glu259 is a binding site for Mg(2+).

Belongs to the class-II aminoacyl-tRNA synthetase family. Phe-tRNA synthetase alpha subunit type 1 subfamily. Tetramer of two alpha and two beta subunits. It depends on Mg(2+) as a cofactor.

It is found in the cytoplasm. The enzyme catalyses tRNA(Phe) + L-phenylalanine + ATP = L-phenylalanyl-tRNA(Phe) + AMP + diphosphate + H(+). In Lacticaseibacillus casei (strain BL23) (Lactobacillus casei), this protein is Phenylalanine--tRNA ligase alpha subunit.